Consider the following 176-residue polypeptide: NAD(P)H-quinone oxidoreductase subunit 6, chloroplastic (176 aa).

Transmembrane regions (helical) follow at residues 10–30, 32–52, 61–81, 92–112, and 152–172; these read FLLV…VLLP, PIYS…FYIL, AQLL…VMFI, LWTV…VSLI, and FFLP…GAIA.

It belongs to the complex I subunit 6 family. As to quaternary structure, NDH is composed of at least 16 different subunits, 5 of which are encoded in the nucleus.

Its subcellular location is the plastid. It is found in the chloroplast thylakoid membrane. It carries out the reaction a plastoquinone + NADH + (n+1) H(+)(in) = a plastoquinol + NAD(+) + n H(+)(out). The enzyme catalyses a plastoquinone + NADPH + (n+1) H(+)(in) = a plastoquinol + NADP(+) + n H(+)(out). In terms of biological role, NDH shuttles electrons from NAD(P)H:plastoquinone, via FMN and iron-sulfur (Fe-S) centers, to quinones in the photosynthetic chain and possibly in a chloroplast respiratory chain. The immediate electron acceptor for the enzyme in this species is believed to be plastoquinone. Couples the redox reaction to proton translocation, and thus conserves the redox energy in a proton gradient. The protein is NAD(P)H-quinone oxidoreductase subunit 6, chloroplastic (ndhG) of Lactuca sativa (Garden lettuce).